Reading from the N-terminus, the 282-residue chain is Bifunctional protein FolD (282 aa).

Residues 165-167 (GRS), Ser190, and Thr231 each bind NADP(+).

The protein belongs to the tetrahydrofolate dehydrogenase/cyclohydrolase family. As to quaternary structure, homodimer.

It catalyses the reaction (6R)-5,10-methylene-5,6,7,8-tetrahydrofolate + NADP(+) = (6R)-5,10-methenyltetrahydrofolate + NADPH. The enzyme catalyses (6R)-5,10-methenyltetrahydrofolate + H2O = (6R)-10-formyltetrahydrofolate + H(+). The protein operates within one-carbon metabolism; tetrahydrofolate interconversion. In terms of biological role, catalyzes the oxidation of 5,10-methylenetetrahydrofolate to 5,10-methenyltetrahydrofolate and then the hydrolysis of 5,10-methenyltetrahydrofolate to 10-formyltetrahydrofolate. The sequence is that of Bifunctional protein FolD from Clostridium botulinum (strain Eklund 17B / Type B).